The primary structure comprises 231 residues: Eukaryotic translation initiation factor 4E-1 (231 aa).

EIF4G-binding regions lie at residues 56–59 and 66–102; these read HPLE and FDNPTTKSRQTAWGSSLRNVYTFSTVEDFWGAYNNIH. MRNA is bound by residues 74–79, Lys-106, and 124–125; these read RQTAWG and WE. An intrachain disulfide couples Cys-129 to Cys-167. The interval 150 to 159 is EIF4G-binding; the sequence is YTLLAMIGHQ. MRNA-binding positions include 174–179 and 219–223; these read RAKGEK and KRLDR.

It belongs to the eukaryotic initiation factor 4E family. In terms of assembly, EIF4F is a multi-subunit complex, the composition of which varies with external and internal environmental conditions. It is composed of at least EIF4A, EIF4E and EIF4G. EIF4E is also known to interact with other partners. In higher plants two isoforms of EIF4F have been identified, named isoform EIF4F and isoform EIF(iso)4F. Isoform EIF4F has subunits p220 and p26, whereas isoform EIF(iso)4F has subunits p82 and p28. As to quaternary structure, (Microbial infection) Interacts with potyvirus viral genome-linked protein (VPg); mostly with tobacco etch virus (TEV-HAT) VPg and, to a lower extent, with potato virus Y (PVY-LYE84 and PVY-LYE90) and pepper mottle virus (PepMoV) VPg. Post-translationally, according to the redox status, the Cys-129-Cys-167 disulfide bridge may have a role in regulating protein function by affecting its ability to bind capped mRNA.

The protein resides in the nucleus. The protein localises to the cytoplasm. Its function is as follows. Component of the protein complex eIF4F, which is involved in the recognition of the mRNA cap, ATP-dependent unwinding of 5'-terminal secondary structure and recruitment of mRNA to the ribosome. Recognizes and binds the 7-methylguanosine-containing mRNA cap during an early step in the initiation of protein synthesis and facilitates ribosome binding by inducing the unwinding of the mRNAs secondary structures. Key component of recessive resistance to potyviruses. (Microbial infection) Susceptibility host factor required for viral infection (e.g. potato virus Y (PVY), pepper mottle virus (PepMoV) and tobacco etch virus (TEV)) by recruiting viral RNAs to the host ribosomal complex via an interaction with viral genome-linked protein (VPg). The chain is Eukaryotic translation initiation factor 4E-1 from Solanum lycopersicum (Tomato).